The primary structure comprises 428 residues: Glutamate-1-semialdehyde 2,1-aminomutase (428 aa).

K267 is subject to N6-(pyridoxal phosphate)lysine.

It belongs to the class-III pyridoxal-phosphate-dependent aminotransferase family. HemL subfamily. As to quaternary structure, homodimer. The cofactor is pyridoxal 5'-phosphate.

The protein localises to the cytoplasm. It catalyses the reaction (S)-4-amino-5-oxopentanoate = 5-aminolevulinate. Its pathway is porphyrin-containing compound metabolism; protoporphyrin-IX biosynthesis; 5-aminolevulinate from L-glutamyl-tRNA(Glu): step 2/2. The polypeptide is Glutamate-1-semialdehyde 2,1-aminomutase (Sulfurihydrogenibium sp. (strain YO3AOP1)).